The sequence spans 763 residues: Phosphoglycerol transferase I (763 aa).

4 helical membrane-spanning segments follow: residues 1–21 (MSEL…AWKA), 26–46 (WWFA…ITLF), 77–97 (ILPG…LGWI), and 108–128 (FGYS…SPAF).

The protein belongs to the OpgB family.

Its subcellular location is the cell inner membrane. The catalysed reaction is a phosphatidylglycerol + a membrane-derived-oligosaccharide D-glucose = a 1,2-diacyl-sn-glycerol + a membrane-derived-oligosaccharide 6-(glycerophospho)-D-glucose.. It participates in glycan metabolism; osmoregulated periplasmic glucan (OPG) biosynthesis. In terms of biological role, transfers a phosphoglycerol residue from phosphatidylglycerol to the membrane-bound nascent glucan backbones. The sequence is that of Phosphoglycerol transferase I from Escherichia coli O6:K15:H31 (strain 536 / UPEC).